Here is a 601-residue protein sequence, read N- to C-terminus: DNA ligase (601 aa).

Asp-258 is an ATP binding site. Lys-260 functions as the N6-AMP-lysine intermediate in the catalytic mechanism. ATP contacts are provided by Arg-265, Arg-280, Glu-310, Phe-350, Arg-427, and Lys-433.

This sequence belongs to the ATP-dependent DNA ligase family. It depends on Mg(2+) as a cofactor. Ca(2+) is required as a cofactor. The cofactor is Mn(2+).

The enzyme catalyses ATP + (deoxyribonucleotide)n-3'-hydroxyl + 5'-phospho-(deoxyribonucleotide)m = (deoxyribonucleotide)n+m + AMP + diphosphate.. Functionally, DNA ligase that seals nicks in double-stranded DNA during DNA replication, DNA recombination and DNA repair. Also has low activity with dATP. Inactive with NAD(+), CTP, GTP, UTP, dCTP, dGTP or dTTP. The sequence is that of DNA ligase from Saccharolobus shibatae (strain ATCC 51178 / DSM 5389 / JCM 8931 / NBRC 15437 / B12) (Sulfolobus shibatae).